The sequence spans 815 residues: (-)-kolavenyl diphosphate synthase TPS28, chloroplastic (815 aa).

A chloroplast-targeting transit peptide spans Met-1–Ile-51. Lys-247 contacts substrate. Mg(2+) contacts are provided by Asp-379 and Asp-381. Residues Asp-379 to Asp-382 carry the DXDD motif motif. Lys-465 contributes to the substrate binding site.

Belongs to the terpene synthase family. Tpsc subfamily. Mg(2+) is required as a cofactor.

Its subcellular location is the plastid. The protein localises to the chloroplast. It catalyses the reaction (2E,6E,10E)-geranylgeranyl diphosphate = (-)-kolavenyl diphosphate. With respect to regulation, inhibited by high concentrations of magnesium. Functionally, diterpene synthase that catalyzes the formation of (-)-kolavenyl diphosphate from geranylgeranyl diphosphate (GGPP). This Tripterygium wilfordii (Thunder God vine) protein is (-)-kolavenyl diphosphate synthase TPS28, chloroplastic.